Consider the following 336-residue polypeptide: O-methyltransferase 2 (336 aa).

S-adenosyl-L-methionine-binding residues include Gly170, Asp198, Asn221, Phe222, and Lys237. Residue His241 is the Proton acceptor of the active site.

Belongs to the class I-like SAM-binding methyltransferase superfamily. Cation-independent O-methyltransferase family. COMT subfamily.

It carries out the reaction (3,5-dichloro-2,4,6-trihydroxyphenyl)hexan-1-one + S-adenosyl-L-methionine = 1-(3,5-dichloro-2,6-dihydroxy-4-methoxyphenyl)hexan-1-one + S-adenosyl-L-homocysteine + H(+). The polypeptide is O-methyltransferase 2 (omt2) (Dictyostelium discoideum (Social amoeba)).